We begin with the raw amino-acid sequence, 342 residues long: N-acetyl-gamma-glutamyl-phosphate reductase (342 aa).

The active site involves Cys-149.

The protein belongs to the NAGSA dehydrogenase family. Type 1 subfamily.

It localises to the cytoplasm. It catalyses the reaction N-acetyl-L-glutamate 5-semialdehyde + phosphate + NADP(+) = N-acetyl-L-glutamyl 5-phosphate + NADPH + H(+). The protein operates within amino-acid biosynthesis; L-arginine biosynthesis; N(2)-acetyl-L-ornithine from L-glutamate: step 3/4. Its function is as follows. Catalyzes the NADPH-dependent reduction of N-acetyl-5-glutamyl phosphate to yield N-acetyl-L-glutamate 5-semialdehyde. This chain is N-acetyl-gamma-glutamyl-phosphate reductase, found in Cereibacter sphaeroides (strain ATCC 17023 / DSM 158 / JCM 6121 / CCUG 31486 / LMG 2827 / NBRC 12203 / NCIMB 8253 / ATH 2.4.1.) (Rhodobacter sphaeroides).